A 160-amino-acid chain; its full sequence is ATP synthase subunit b (160 aa).

The helical transmembrane segment at 12–32 (ISFVLFVWFCMKYVWYPFISI) threads the bilayer.

This sequence belongs to the ATPase B chain family. In terms of assembly, F-type ATPases have 2 components, F(1) - the catalytic core - and F(0) - the membrane proton channel. F(1) has five subunits: alpha(3), beta(3), gamma(1), delta(1), epsilon(1). F(0) has three main subunits: a(1), b(2) and c(10-14). The alpha and beta chains form an alternating ring which encloses part of the gamma chain. F(1) is attached to F(0) by a central stalk formed by the gamma and epsilon chains, while a peripheral stalk is formed by the delta and b chains.

It localises to the cell inner membrane. Functionally, f(1)F(0) ATP synthase produces ATP from ADP in the presence of a proton or sodium gradient. F-type ATPases consist of two structural domains, F(1) containing the extramembraneous catalytic core and F(0) containing the membrane proton channel, linked together by a central stalk and a peripheral stalk. During catalysis, ATP synthesis in the catalytic domain of F(1) is coupled via a rotary mechanism of the central stalk subunits to proton translocation. Component of the F(0) channel, it forms part of the peripheral stalk, linking F(1) to F(0). The polypeptide is ATP synthase subunit b (Blochmanniella pennsylvanica (strain BPEN)).